The primary structure comprises 78 residues: MNKELSFEEGIEHLERIVRELEQKEVPLEQALNLFRQGIELVQKCNNQLDYAEKQMQILLENPNGELEVRPADFPVEG.

Belongs to the XseB family. As to quaternary structure, heterooligomer composed of large and small subunits.

Its subcellular location is the cytoplasm. It carries out the reaction Exonucleolytic cleavage in either 5'- to 3'- or 3'- to 5'-direction to yield nucleoside 5'-phosphates.. In terms of biological role, bidirectionally degrades single-stranded DNA into large acid-insoluble oligonucleotides, which are then degraded further into small acid-soluble oligonucleotides. The chain is Exodeoxyribonuclease 7 small subunit from Desulfitobacterium hafniense (strain Y51).